Here is a 255-residue protein sequence, read N- to C-terminus: 3-dehydroquinate dehydratase (255 aa).

3-dehydroquinate-binding positions include 47–49 and R83; that span reads EWR. H144 (proton donor/acceptor) is an active-site residue. K171 functions as the Schiff-base intermediate with substrate in the catalytic mechanism. Positions 214, 233, and 237 each coordinate 3-dehydroquinate.

Belongs to the type-I 3-dehydroquinase family. In terms of assembly, homodimer.

The catalysed reaction is 3-dehydroquinate = 3-dehydroshikimate + H2O. Its pathway is metabolic intermediate biosynthesis; chorismate biosynthesis; chorismate from D-erythrose 4-phosphate and phosphoenolpyruvate: step 3/7. In terms of biological role, involved in the third step of the chorismate pathway, which leads to the biosynthesis of aromatic amino acids. Catalyzes the cis-dehydration of 3-dehydroquinate (DHQ) and introduces the first double bond of the aromatic ring to yield 3-dehydroshikimate. This Alkaliphilus oremlandii (strain OhILAs) (Clostridium oremlandii (strain OhILAs)) protein is 3-dehydroquinate dehydratase.